A 1605-amino-acid chain; its full sequence is GTPase-activating protein pac-1 (1605 aa).

Residues 1-574 (MEEHHRRLHV…QRFIALFNSS (574 aa)) form a required for localization to adherens junctions region. 3 disordered regions span residues 293–430 (QRHP…ISTS), 529–556 (MRSG…LNAP), and 574–593 (SKTS…RSRT). Residues 323–334 (SKEDPSEDTGHD) show a composition bias toward basic and acidic residues. 3 stretches are compositionally biased toward low complexity: residues 353-365 (RNAS…SSRS), 420-430 (TTSSTSSISTS), and 530-552 (RSGG…TSRS). The PH domain occupies 599–726 (RFALPGTILQ…WISVLQSSSE (128 aa)). Polar residues-rich tracts occupy residues 728–745 (GIAT…TTGR) and 846–855 (KNSQLQSPTA). 2 disordered regions span residues 728 to 752 (GIAT…NAVS) and 846 to 942 (KNSQ…AGAP). The span at 868-879 (SSSQTMATTSSS) shows a compositional bias: low complexity. Residues 908–917 (SGRKWKKSKA) are compositionally biased toward basic residues. A compositionally biased stretch (low complexity) spans 928–941 (GSSSGSQQQGAAGA). One can recognise a Rho-GAP domain in the interval 948 to 1146 (VRIADCPTGS…TLIHYNLWMF (199 aa)). 5 disordered regions span residues 1152 to 1176 (TEDA…YGVG), 1207 to 1258 (EGKG…AASV), 1277 to 1339 (SRQT…RRKR), 1438 to 1533 (TSDY…ARRH), and 1554 to 1605 (GIRK…DELL). A compositionally biased stretch (basic residues) spans 1211–1229 (QKIKNMLRRNSRRDKSKSK). Polar residues-rich tracts occupy residues 1244–1257 (GWTQ…SAAS) and 1278–1300 (RQTV…RLDQ). Over residues 1301–1312 (SPSLESSLGSLP) the composition is skewed to low complexity. Polar residues predominate over residues 1438–1453 (TSDYSTTSSAPLSTNP). Over residues 1461 to 1476 (DQPNSSSDYASSDPSP) the composition is skewed to low complexity. Polar residues-rich tracts occupy residues 1480 to 1493 (NPST…SNLA) and 1500 to 1515 (HATS…MSRS). The span at 1558-1575 (SSPDVSRDEVSDDEKNHQ) shows a compositional bias: basic and acidic residues.

In terms of assembly, associated with the catenin-cadherin complex consisting of hmr-1, hmp-1 and hmp-2; this is mediated by interaction with picc-1.

It localises to the cytoplasm. It is found in the cell junction. The protein resides in the adherens junction. GTPase-activating protein for members of the Rho subfamily including Rac1, RhoA and cdc42 and other Ras-related subfamilies including let-60. Mediates radial (inner-outer) polarity and gastrulation by excluding par-6 from contacted cell surfaces; acts by inactivating cdc42 at inner cell surfaces which limits active cdc42 to outer cell surfaces devoid of cell-cell contacts, where cdc42 can bind and recruit par-6. Required for blastomere polarization. The protein is GTPase-activating protein pac-1 (pac-1) of Caenorhabditis elegans.